Here is a 1012-residue protein sequence, read N- to C-terminus: Structural polyprotein (1012 aa).

Aspartate 30 is a binding site for a divalent metal cation. Residues 513–755 (ADKGYEVVAN…AGRQYHLAMA (243 aa)) enclose the Peptidase S50 domain. Serine 652 (nucleophile) is an active-site residue. Lysine 692 is a catalytic residue. A disordered region spans residues 970-1012 (MEMKHRNPRRAPPKPKPKPNAPTQRPPGRLGRWIRTVSDEDLE). Residues 975 to 986 (RNPRRAPPKPKP) are compositionally biased toward basic residues. The interaction with VP1 protein stretch occupies residues 1003–1012 (IRTVSDEDLE).

As to quaternary structure, homotrimer. A central divalent metal stabilizes the VP2 trimer. Interacts with host ITGA4/ITGB1. In terms of assembly, homodimer. Interacts (via C-terminus) with VP1 in the cytoplasm. Interacts with VP2. Post-translationally, specific enzymatic cleavages yield mature proteins. The capsid assembly seems to be regulated by polyprotein processing. The protease VP4 cleaves itself off the polyprotein, thus releasing pre-VP2 and VP3 within the infected cell. During capsid assembly, the C-terminus of pre-VP2 is further processed by VP4, giving rise to VP2, the external capsid protein and three small peptides that all stay closely associated with the capsid.

Its subcellular location is the virion. The protein localises to the host cytoplasm. Capsid protein VP2 self assembles to form an icosahedral capsid with a T=13 symmetry, about 70 nm in diameter, and consisting of 260 VP2 trimers. The capsid encapsulates the genomic dsRNA. VP2 is also involved in attachment and entry into the host cell by interacting with host ITGA4/ITGB1. In terms of biological role, the precursor of VP2 plays an important role in capsid assembly. First, pre-VP2 and VP2 oligomers assemble to form a procapsid. Then, the pre-VP2 intermediates may be processed into VP2 proteins by proteolytic cleavage mediated by VP4 to obtain the mature virion. The final capsid is composed of pentamers and hexamers but VP2 has a natural tendency to assemble into all-pentameric structures. Therefore pre-VP2 may be required to allow formation of the hexameric structures. Its function is as follows. Protease VP4 is a serine protease that cleaves the polyprotein into its final products. Pre-VP2 is first partially cleaved, and may be completely processed by VP4 upon capsid maturation. Functionally, capsid protein VP3 plays a key role in virion assembly by providing a scaffold for the capsid made of VP2. May self-assemble to form a T=4-like icosahedral inner-capsid composed of at least 180 trimers. Plays a role in genomic RNA packaging by recruiting VP1 into the capsid and interacting with the dsRNA genome segments to form a ribonucleoprotein complex. Additionally, the interaction of the VP3 C-terminal tail with VP1 removes the inherent structural blockade of the polymerase active site. Thus, VP3 can also function as a transcriptional activator. Structural peptide 1 is a small peptide derived from pre-VP2 C-terminus. It destabilizes and perforates cell membranes, suggesting a role during entry. In terms of biological role, structural peptide 2 is a small peptide derived from pVP2 C-terminus. It is not essential for the virus viability, but viral growth is affected when missing. Its function is as follows. Structural peptide 3 is a small peptide derived from pVP2 C-terminus. It is not essential for the virus viability, but viral growth is affected when missing. Functionally, structural peptide 4 is a small peptide derived from pVP2 C-terminus. It is essential for the virus viability. The protein is Structural polyprotein of Avian infectious bursal disease virus (strain E) (IBDV).